A 325-amino-acid chain; its full sequence is NADH-quinone oxidoreductase subunit H (325 aa).

The next 8 membrane-spanning stretches (helical) occupy residues 11–31 (VIIAVVKALVILFVVVGCGAF), 81–101 (VIFTLAPMIAFTSLLLAMAIV), 114–134 (IGLLFFLMMAGLAVYAVLFAG), 154–174 (LSYEVFLGLSLMGVVAQAGSF), 186–206 (LWNVIPQFLGFLTFCIAGVAV), 237–257 (FFVGEYVGIVTVSALIVTLFF), 265–285 (LPPVIWFALKTAFFMMMFILI), and 304–324 (VCLPLTLLNLLATAAVILYTA).

The protein belongs to the complex I subunit 1 family. NDH-1 is composed of 13 different subunits. Subunits NuoA, H, J, K, L, M, N constitute the membrane sector of the complex.

It localises to the cell inner membrane. The catalysed reaction is a quinone + NADH + 5 H(+)(in) = a quinol + NAD(+) + 4 H(+)(out). Its function is as follows. NDH-1 shuttles electrons from NADH, via FMN and iron-sulfur (Fe-S) centers, to quinones in the respiratory chain. The immediate electron acceptor for the enzyme in this species is believed to be ubiquinone. Couples the redox reaction to proton translocation (for every two electrons transferred, four hydrogen ions are translocated across the cytoplasmic membrane), and thus conserves the redox energy in a proton gradient. This subunit may bind ubiquinone. This chain is NADH-quinone oxidoreductase subunit H, found in Erwinia tasmaniensis (strain DSM 17950 / CFBP 7177 / CIP 109463 / NCPPB 4357 / Et1/99).